The sequence spans 507 residues: RNA polymerase I-specific transcription initiation factor RRN11 (507 aa).

Over residues 37–47 the composition is skewed to polar residues; the sequence is KSTTTDSLPTP. Disordered stretches follow at residues 37-76 and 89-124; these read KSTTTDSLPTPENSAAENNDEEEGQNSEAGTYRRSVLQQK and GEIYSTTESETDSQEEETEEGGEHDTGIDKEDSDEE. Acidic residues predominate over residues 97–108; that stretch reads SETDSQEEETEE. Residues 109 to 124 are compositionally biased toward basic and acidic residues; the sequence is GGEHDTGIDKEDSDEE.

In terms of assembly, component of the core factor (CF) complex, which consists of RRN6, RRN7 and RRN11. The CF heterotrimer may further dimerize to form a hexamer. RRN11 interacts with RRN6, RRN7 and SPT15.

It is found in the nucleus. It localises to the nucleolus. Acts as a component of the core factor (CF) complex which is essential for the initiation of rDNA transcription by RNA polymerase I. After binding of UAF (upstream activation factor) to an upstream element of the promoter, CF is recruited in a SPT15/TBP-dependent manner to form a preinitiation complex. In Saccharomyces cerevisiae (strain ATCC 204508 / S288c) (Baker's yeast), this protein is RNA polymerase I-specific transcription initiation factor RRN11 (RRN11).